Consider the following 922-residue polypeptide: MATIGPSGLHPGERASVCPHEGVPRPSGSLELECLQQFKVTRTQLQQIQASLLCSMEQALKGQDSPAPSVRMLPTYVRSTPHGTEQGDFLVLELGATGASLRVLWVTLTGTKECRVEPRSREFVIPQEVILGAGQQLFDFAARCLSEFLDAYPVENQGLKLGFNFSFPCHQTGLDRSTLISWTKGFRCSGVEGQDVVQLLRDAIQRQGTYRIDVVAMVNDTVGTMMGCELGTRPCEVGLIVDTGTNACYMEEARHVAALDEDRGRTCVSIEWGSFYDEDALGPVLTTFDSALDRESLTPGAQRFEKMIGGLYLGELVRLVLVHLTQHGVLFDGCASPALLSQGCILLDHVAEMEDTATGTARVHTILQDLGLSPRASDAELVQYVCVAVCTRAAQLCAAALAAVLSRLQHSREQQTLQVAVATGGRVFERHPRFLRILKETVTLLAPNCDVSFIPSVDGGGRGVAMVTAVAARLAAHRRILEETLAPFQLTLEQMTVVQAQMREAMIRGLQGEASSLRMLPTYVRATPDGSERGDFLALDLGGTNFRVLLVRVAEGSVQIINQVYSIPECRAQGSGQKLFDHIVDCIVDFQKRQGLSGQSLPLGFTFSFPCKQLGLDQGILLNWTKGFNASGCEGQDVVYLLREAIRRRQAVELNVVAIVNDTVGTMMSCGYDDPRCEMGLIVGTGTNACYMEELRNVASVPGDSGLMCINMEWGAFGDDGSLGTLSTRFDTSVDQASINPGKQRFEKMISGMYLGEIVRHILLHLTNLGVLFRGQKTQCLQARDIFKTKFLSEIESDSLALRQVRAILEDLGLTLTSDDALMVLEVCQAVSRRAAQLCGAGVAAVVEKIRENRGLQELTVSVGVDGTLYKLHPHFSKLVSATVRKLAPQCTVTFLQSEDGSGKGAALVTAVACRLTQMAHV.

The disordered stretch occupies residues 1–23 (MATIGPSGLHPGERASVCPHEGV). Hexokinase domains lie at 25-469 (RPSG…MVTA) and 475-911 (AAHR…LVTA). The segment at 82–218 (HGTEQGDFLV…TYRIDVVAMV (137 aa)) is hexokinase small subdomain 1. Residue 93 to 100 (ELGATGAS) coordinates ATP. 93-102 (ELGATGASLR) is a binding site for D-glucose 6-phosphate. Residues S166, 183 to 184 (TK), and 219 to 220 (ND) contribute to the D-glucose site. Residues 219–458 (NDTVGTMMGC…CDVSFIPSVD (240 aa)) are hexokinase large subdomain 1. Residues D220 and T243 each coordinate D-glucose 6-phosphate. Residues N246, E271, and 302-305 (QRFE) each bind D-glucose. 424 to 426 (GGR) serves as a coordination point for D-glucose 6-phosphate. ATP is bound by residues 436–437 (RI) and 540–545 (DLGGTN). The interval 529-660 (DGSERGDFLA…AVELNVVAIV (132 aa)) is hexokinase small subdomain 2. 540–544 (DLGGT) is a binding site for D-glucose 6-phosphate. Residues 608–609 (SF), 625–626 (TK), and 661–662 (ND) contribute to the D-glucose site. The segment at 661–900 (NDTVGTMMSC…CTVTFLQSED (240 aa)) is hexokinase large subdomain 2. 2 residues coordinate D-glucose 6-phosphate: D662 and T685. T685 provides a ligand contact to ATP. Residues 687 to 688 (TN), E713, and E747 contribute to the D-glucose site. Residues 752–753 (GM), 789–793 (TKFLS), and 868–872 (TLYKL) contribute to the ATP site. Residues 866-868 (DGT) and S902 each bind D-glucose 6-phosphate.

Belongs to the hexokinase family.

The catalysed reaction is a D-hexose + ATP = a D-hexose 6-phosphate + ADP + H(+). It catalyses the reaction D-fructose + ATP = D-fructose 6-phosphate + ADP + H(+). The enzyme catalyses D-glucose + ATP = D-glucose 6-phosphate + ADP + H(+). Its pathway is carbohydrate metabolism; hexose metabolism. The protein operates within carbohydrate degradation; glycolysis; D-glyceraldehyde 3-phosphate and glycerone phosphate from D-glucose: step 1/4. With respect to regulation, hexokinase is an allosteric enzyme inhibited by its product D-glucose 6-phosphate. Catalyzes the phosphorylation of hexose, such as D-glucose and D-fructose, to hexose 6-phosphate (D-glucose 6-phosphate and D-fructose 6-phosphate, respectively). Mediates the initial step of glycolysis by catalyzing phosphorylation of D-glucose to D-glucose 6-phosphate. The protein is Hexokinase-3 of Mus musculus (Mouse).